An 880-amino-acid polypeptide reads, in one-letter code: Tyrosine-protein kinase receptor TYRO3 (880 aa).

The signal sequence occupies residues 1–30 (MALRRSMGWPGLRPLLLAGLASLLLPGSAA). 2 consecutive Ig-like C2-type domains span residues 31 to 118 (AGLK…TKIS) and 129 to 209 (PFFT…PAIV). Topologically, residues 31–419 (AGLKLMGAPV…QGPPHSRTSW (389 aa)) are extracellular. Asn-53, Asn-75, Asn-181, Asn-220, Asn-230, Asn-283, Asn-356, and Asn-370 each carry an N-linked (GlcNAc...) asparagine glycan. 2 cysteine pairs are disulfide-bonded: Cys-54-Cys-107 and Cys-150-Cys-193. Fibronectin type-III domains lie at 217–310 (APFN…TKGL) and 315–406 (APQN…SHDH). A helical transmembrane segment spans residues 420–440 (VPVVLGVLTALITAAALALIL). The Cytoplasmic segment spans residues 441 to 880 (LRKRRKETRF…QQGLLPHSSC (440 aa)). At Ser-456 the chain carries Phosphoserine. Residues 508–785 (FTLGRMLGKG…LENILGHLSV (278 aa)) enclose the Protein kinase domain. Residues 514–522 (LGKGEFGSV) and Lys-540 each bind ATP. Residue Asp-645 is the Proton acceptor of the active site. A phosphotyrosine; by autocatalysis mark is found at Tyr-671, Tyr-675, Tyr-676, and Tyr-794. Positions 800 to 864 (AEQPTESGSP…QQPESPLNEN (65 aa)) are disordered. Ser-808 and Ser-859 each carry phosphoserine. The segment covering 849–864 (SPGQLEQQPESPLNEN) has biased composition (polar residues).

The protein belongs to the protein kinase superfamily. Tyr protein kinase family. AXL/UFO subfamily. As to quaternary structure, monomer and homodimer. Interacts (via N-terminus) with extracellular ligands TULP1 and GAS6. Interacts with PIK3R1; this interaction increases PI3-kinase activity. In terms of processing, autophosphorylated. As to expression, abundant in the brain and lower levels in other tissues.

It localises to the cell membrane. It carries out the reaction L-tyrosyl-[protein] + ATP = O-phospho-L-tyrosyl-[protein] + ADP + H(+). Its function is as follows. Receptor tyrosine kinase that transduces signals from the extracellular matrix into the cytoplasm by binding to several ligands including TULP1 or GAS6. Regulates many physiological processes including cell survival, migration and differentiation. Ligand binding at the cell surface induces dimerization and autophosphorylation of TYRO3 on its intracellular domain that provides docking sites for downstream signaling molecules. Following activation by ligand, interacts with PIK3R1 and thereby enhances PI3-kinase activity. Activates the AKT survival pathway, including nuclear translocation of NF-kappa-B and up-regulation of transcription of NF-kappa-B-regulated genes. TYRO3 signaling plays a role in various processes such as neuron protection from excitotoxic injury, platelet aggregation and cytoskeleton reorganization. Also plays an important role in inhibition of Toll-like receptors (TLRs)-mediated innate immune response by activating STAT1, which selectively induces production of suppressors of cytokine signaling SOCS1 and SOCS3. In Mus musculus (Mouse), this protein is Tyrosine-protein kinase receptor TYRO3 (Tyro3).